Here is a 312-residue protein sequence, read N- to C-terminus: Olfactory receptor-like protein COR6 (312 aa).

Over 1–26 (MASGNCTTPTTFILSGLTDNPGLQMP) the chain is Extracellular. A glycan (N-linked (GlcNAc...) asparagine) is linked at Asn5. The chain crosses the membrane as a helical span at residues 27–49 (LFMVFLAIYTITLLTNLGLIALI). The Cytoplasmic segment spans residues 50–57 (SIDLQLQT). Residues 58-79 (PMYIFLQNLSFTDAVYSTVITP) form a helical membrane-spanning segment. At 80-100 (KMLATFLEETKTISYVGCILQ) the chain is on the extracellular side. Cys97 and Cys179 form a disulfide bridge. Residues 101 to 120 (YFSFVLLTVRECLLLAVMAY) form a helical membrane-spanning segment. The Cytoplasmic segment spans residues 121-139 (DRYAAICKPLLYPAIMTKA). Residues 140 to 164 (VCWRLVKGLYSLAFLNFLVHTSGLL) traverse the membrane as a helical segment. The Extracellular segment spans residues 165-205 (KLSFCSSNVVNHFFCDNSPLFQISSSSTALNELLVFIFGSL). Residues 206 to 226 (FVMSSIITILISYVFIILTVV) traverse the membrane as a helical segment. Topologically, residues 227–239 (RIRSKERKYKAFS) are cytoplasmic. The helical transmembrane segment at 240 to 260 (TCTSHLMAVSLFHGTIVFMYF) threads the bilayer. Residues 261–271 (QPANNFSLDKD) are Extracellular-facing. Residues 272–292 (KIMSLFYTVVIPMLNPLIYSW) traverse the membrane as a helical segment. Residues 293–312 (RNKEVKDALHRAIATAVLFH) lie on the Cytoplasmic side of the membrane.

The protein belongs to the G-protein coupled receptor 1 family.

The protein resides in the cell membrane. Functionally, odorant receptor. In Gallus gallus (Chicken), this protein is Olfactory receptor-like protein COR6 (COR6).